Here is a 231-residue protein sequence, read N- to C-terminus: Octanoyltransferase (231 aa).

The region spanning 29–231 (PQDPDLLWLC…GRQLCIWLAP (203 aa)) is the BPL/LPL catalytic domain. Substrate-binding positions include 68-75 (RGGQVTFH), 164-166 (ALG), and 177-179 (GVA). The active-site Acyl-thioester intermediate is Cys-195.

Belongs to the LipB family.

It localises to the cytoplasm. It carries out the reaction octanoyl-[ACP] + L-lysyl-[protein] = N(6)-octanoyl-L-lysyl-[protein] + holo-[ACP] + H(+). Its pathway is protein modification; protein lipoylation via endogenous pathway; protein N(6)-(lipoyl)lysine from octanoyl-[acyl-carrier-protein]: step 1/2. In terms of biological role, catalyzes the transfer of endogenously produced octanoic acid from octanoyl-acyl-carrier-protein onto the lipoyl domains of lipoate-dependent enzymes. Lipoyl-ACP can also act as a substrate although octanoyl-ACP is likely to be the physiological substrate. This is Octanoyltransferase from Verminephrobacter eiseniae (strain EF01-2).